The sequence spans 314 residues: 1-aminocyclopropane-1-carboxylate oxidase 1 (314 aa).

The 101-residue stretch at 153–253 (PNFGTKVSNY…RMSIASFYNP (101 aa)) folds into the Fe2OG dioxygenase domain. Residues histidine 177, aspartate 179, and histidine 234 each coordinate Fe cation.

The protein belongs to the iron/ascorbate-dependent oxidoreductase family. In terms of assembly, monomer. Requires Fe cation as cofactor.

The catalysed reaction is 1-aminocyclopropane-1-carboxylate + L-ascorbate + O2 = ethene + L-dehydroascorbate + hydrogen cyanide + CO2 + 2 H2O. It functions in the pathway alkene biosynthesis; ethylene biosynthesis via S-adenosyl-L-methionine; ethylene from S-adenosyl-L-methionine: step 2/2. This is 1-aminocyclopropane-1-carboxylate oxidase 1 from Malus domestica (Apple).